The sequence spans 456 residues: Glutamate-gated chloride channel (456 aa).

An N-terminal signal peptide occupies residues 1-22 (MGSGHYFWAILYFASLCSASLA). Residues 23–245 (NNAKINFREK…VDLLFKREFS (223 aa)) are Extracellular-facing. Positions 71, 90, and 154 each coordinate L-glutamate. Cysteine 163 and cysteine 177 are joined by a disulfide. Serine 183 is an L-glutamate binding site. Cysteine 222 and cysteine 233 are oxidised to a cystine. The helical transmembrane segment at 246–268 (YYLIQIYIPCCMLVIVSWVSFWL) threads the bilayer. Residues 269-273 (DQGAV) lie on the Cytoplasmic side of the membrane. A helical membrane pass occupies residues 274 to 295 (PARVSLGVTTLLTMATQTSGIN). Residues 296 to 302 (ASLPPVS) are Extracellular-facing. A helical membrane pass occupies residues 303-323 (YTKAIDVWTGVCLTFVFGALL). Topologically, residues 324–426 (EFALVNYASR…RQCSRSKRID (103 aa)) are cytoplasmic. The helical transmembrane segment at 427–450 (VISRITFPLVFALFNLVYWSTYLF) threads the bilayer. Topologically, residues 451–456 (REEEDE) are extracellular.

This sequence belongs to the ligand-gated ion channel (TC 1.A.9) family. Glutamate-gated chloride channel (TC 1.A.9.4) subfamily. Pentamer. Homomultimer. Expressed in the medulla layers (at protein level). Expressed in all major ON pathway medulla neurons (Mi1, Tm3, Mi4, and Mi9) and in OFF pathway neurons (Tm1, Tm2, Tm4, and Tm9).

The protein localises to the postsynaptic cell membrane. It localises to the cell membrane. With respect to regulation, glutamate binding triggers a rapidly reversible current, while the anti-helmintic drug ivermectin triggers a permanently open channel configuration. Inhibited by picrotoxin. Its function is as follows. Glutamate-gated chloride channel subunit. Together with Gamma-aminobutyric acid receptor Rdl, plays an important role in the visual response by regulating the activity of ON/OFF-selective neurons. The chain is Glutamate-gated chloride channel (GluClalpha) from Drosophila melanogaster (Fruit fly).